A 348-amino-acid polypeptide reads, in one-letter code: N-acetyl-gamma-glutamyl-phosphate reductase (348 aa).

The active site involves cysteine 149.

It belongs to the NAGSA dehydrogenase family. Type 1 subfamily.

It is found in the cytoplasm. The catalysed reaction is N-acetyl-L-glutamate 5-semialdehyde + phosphate + NADP(+) = N-acetyl-L-glutamyl 5-phosphate + NADPH + H(+). The protein operates within amino-acid biosynthesis; L-arginine biosynthesis; N(2)-acetyl-L-ornithine from L-glutamate: step 3/4. Its function is as follows. Catalyzes the NADPH-dependent reduction of N-acetyl-5-glutamyl phosphate to yield N-acetyl-L-glutamate 5-semialdehyde. The protein is N-acetyl-gamma-glutamyl-phosphate reductase of Cellvibrio japonicus (strain Ueda107) (Pseudomonas fluorescens subsp. cellulosa).